The chain runs to 188 residues: uncharacterized protein (188 aa).

The helical transmembrane segment at Ile-121–Val-139 threads the bilayer.

This sequence to B.subtilis YwjB.

The protein localises to the membrane. This is an uncharacterized protein from Bacillus subtilis (strain 168).